Consider the following 435-residue polypeptide: Putative GMP synthase [glutamine-hydrolyzing] 2 (435 aa).

The 120-residue stretch at 1–120 (MKQDMIVILD…VFDTCQAEAN (120 aa)) folds into the Glutamine amidotransferase type-1; truncated domain. One can recognise a GMPS ATP-PPase domain in the interval 121–310 (WNMANFVNDQ…LGLPYEMVYR (190 aa)). 148-154 (SGGVDSS) is an ATP binding site.

As to quaternary structure, homodimer.

It catalyses the reaction XMP + L-glutamine + ATP + H2O = GMP + L-glutamate + AMP + diphosphate + 2 H(+). It functions in the pathway purine metabolism; GMP biosynthesis; GMP from XMP (L-Gln route): step 1/1. Functionally, catalyzes the synthesis of GMP from XMP. The polypeptide is Putative GMP synthase [glutamine-hydrolyzing] 2 (guaA2) (Bacteroides thetaiotaomicron (strain ATCC 29148 / DSM 2079 / JCM 5827 / CCUG 10774 / NCTC 10582 / VPI-5482 / E50)).